Consider the following 73-residue polypeptide: Structural DNA-binding protein p10 (73 aa).

Positions M1–Q35 are disordered.

This sequence belongs to the asfivirus P10 family.

It is found in the virion. Functionally, may play a role in genome packaging through direct interaction with viral DNA. Binds to ssDNA and dsDNA with the same apparent affinity in vitro. The polypeptide is Structural DNA-binding protein p10 (African swine fever virus (isolate Tick/Malawi/Lil 20-1/1983) (ASFV)).